Here is a 522-residue protein sequence, read N- to C-terminus: Cytochrome P450 1A3 (522 aa).

Residue F229 participates in substrate binding. Residue C463 coordinates heme.

Belongs to the cytochrome P450 family. Heme is required as a cofactor. Liver.

The protein resides in the endoplasmic reticulum membrane. It localises to the microsome membrane. It catalyses the reaction an organic molecule + reduced [NADPH--hemoprotein reductase] + O2 = an alcohol + oxidized [NADPH--hemoprotein reductase] + H2O + H(+). Cytochromes P450 are a group of heme-thiolate monooxygenases. They oxidize a variety of structurally unrelated compounds, including steroids, fatty acids, and xenobiotics. The protein is Cytochrome P450 1A3 (cyp1a3) of Oncorhynchus mykiss (Rainbow trout).